A 257-amino-acid chain; its full sequence is V-type proton ATPase subunit D (257 aa).

The tract at residues 211–233 is disordered; it reads KKKDLKAKEAQKEENSANKTIME. Residues 216–226 show a composition bias toward basic and acidic residues; it reads KAKEAQKEENS.

This sequence belongs to the V-ATPase D subunit family. As to quaternary structure, V-ATPase is a heteromultimeric enzyme composed of a peripheral catalytic V1 complex (components A to H) attached to an integral membrane V0 proton pore complex (components: a, c, c', c'' and d).

Functionally, subunit of the peripheral V1 complex of vacuolar ATPase. Vacuolar ATPase is responsible for acidifying a variety of intracellular compartments in eukaryotic cells, thus providing most of the energy required for transport processes in the vacuolar system. The sequence is that of V-type proton ATPase subunit D (atp6v1d) from Dictyostelium discoideum (Social amoeba).